A 113-amino-acid polypeptide reads, in one-letter code: Large ribosomal subunit protein bL17 (113 aa).

This sequence belongs to the bacterial ribosomal protein bL17 family. Part of the 50S ribosomal subunit. Contacts protein L32.

This Clostridium kluyveri (strain NBRC 12016) protein is Large ribosomal subunit protein bL17.